The chain runs to 391 residues: Beta sliding clamp (391 aa).

Belongs to the beta sliding clamp family. In terms of assembly, forms a ring-shaped head-to-tail homodimer around DNA which binds and tethers DNA polymerases and other proteins to the DNA. The DNA replisome complex has a single clamp-loading complex (3 tau and 1 each of delta, delta', psi and chi subunits) which binds 3 Pol III cores (1 core on the leading strand and 2 on the lagging strand) each with a beta sliding clamp dimer. Additional proteins in the replisome are other copies of gamma, psi and chi, Ssb, DNA helicase and RNA primase.

It is found in the cytoplasm. Functionally, confers DNA tethering and processivity to DNA polymerases and other proteins. Acts as a clamp, forming a ring around DNA (a reaction catalyzed by the clamp-loading complex) which diffuses in an ATP-independent manner freely and bidirectionally along dsDNA. Initially characterized for its ability to contact the catalytic subunit of DNA polymerase III (Pol III), a complex, multichain enzyme responsible for most of the replicative synthesis in bacteria; Pol III exhibits 3'-5' exonuclease proofreading activity. The beta chain is required for initiation of replication as well as for processivity of DNA replication. This chain is Beta sliding clamp (dnaN), found in Synechocystis sp. (strain ATCC 27184 / PCC 6803 / Kazusa).